A 342-amino-acid polypeptide reads, in one-letter code: UDP-3-O-acylglucosamine N-acyltransferase (342 aa).

H241 serves as the catalytic Proton acceptor.

Belongs to the transferase hexapeptide repeat family. LpxD subfamily. As to quaternary structure, homotrimer.

It catalyses the reaction a UDP-3-O-[(3R)-3-hydroxyacyl]-alpha-D-glucosamine + a (3R)-hydroxyacyl-[ACP] = a UDP-2-N,3-O-bis[(3R)-3-hydroxyacyl]-alpha-D-glucosamine + holo-[ACP] + H(+). It functions in the pathway bacterial outer membrane biogenesis; LPS lipid A biosynthesis. Catalyzes the N-acylation of UDP-3-O-acylglucosamine using 3-hydroxyacyl-ACP as the acyl donor. Is involved in the biosynthesis of lipid A, a phosphorylated glycolipid that anchors the lipopolysaccharide to the outer membrane of the cell. This Pasteurella multocida (strain Pm70) protein is UDP-3-O-acylglucosamine N-acyltransferase.